Here is a 249-residue protein sequence, read N- to C-terminus: Phosphoserine phosphatase (249 aa).

The protein belongs to the HAD-like hydrolase superfamily. Homodimer. Requires Mg(2+) as cofactor. Co(2+) serves as cofactor.

It carries out the reaction O-phospho-L-serine + H2O = L-serine + phosphate. The catalysed reaction is O-phospho-D-serine + H2O = D-serine + phosphate. Its pathway is amino-acid biosynthesis; L-serine biosynthesis; L-serine from 3-phospho-D-glycerate: step 3/3. Its function is as follows. Catalyzes the last step of the phosphorylated serine biosynthetic pathway, i.e. dephosphorylation of O-phospho-L-serine to form L-serine. Is also able to dephosphorylate O-phospho-D-serine with similar efficiency. Displays a poor activity on L-phosphothreonine, and cannot use L-phosphotyrosine, pyridoxal phosphate, glucose 6-phosphate, or fructose 6-phosphate as substrates. The protein is Phosphoserine phosphatase of Thermus thermophilus (strain ATCC BAA-163 / DSM 7039 / HB27).